The primary structure comprises 3096 residues: Unconventional myosin-XVB (3096 aa).

Disordered stretches follow at residues 1-330 (MGRN…GPED), 389-489 (RPPE…GWGR), 508-540 (GGMP…ETPD), and 553-649 (AGRA…GPRL). The segment covering 19-33 (ASGEQESGSASADGA) has biased composition (low complexity). Residues 34–50 (PSRERRSDRGQADRAKP) show a composition bias toward basic and acidic residues. The span at 124–143 (RRRRKRKDKGPSARRGRRTP) shows a compositional bias: basic residues. 2 stretches are compositionally biased toward basic and acidic residues: residues 212–222 (DWPHADTRGRE) and 261–288 (TFED…RGAE). Residues 307–330 (AVGQVPAAAGEGEAGAAAGAGPED) show a composition bias toward low complexity. The segment covering 406–416 (WGRRKPDEGRG) has biased composition (basic and acidic residues). The segment covering 417-426 (HGRGSKGRGR) has biased composition (basic residues). The span at 427 to 489 (GKADEGRGHE…HQRGYEGWGR (63 aa)) shows a compositional bias: basic and acidic residues. The Myosin motor domain maps to 720 to 1394 (EDMEDLARLR…GWQRLEELRD (675 aa)). Residue 818 to 825 (GHSGSGKT) participates in ATP binding. The interval 1273-1295 (LEDLIARLGRSHVYFIQCLTPNP) is actin-binding. Residues 1414 to 1443 (RQRVLPRMQARMRGFQARKRYLRRRAALGQ) enclose the IQ domain. Residues 1551-1702 (RPGQPLAKPL…PTQLEWLAGW (152 aa)) form the MyTH4 1 domain. 3 disordered regions span residues 1802–1833 (PGIQ…VQRS), 1963–2026 (MQQR…PKSF), and 2040–2262 (QITV…LPED). Residues 1808–1820 (SLPPGPPPGPAPT) show a composition bias toward pro residues. Over residues 1963-1980 (MQQRQQQARASEAASQAS) the composition is skewed to low complexity. A compositionally biased stretch (acidic residues) spans 2059–2076 (AQEEEEEEEEEEEQEEQE). Residues 2102 to 2116 (APKEAEAEPAKETAA) are compositionally biased toward basic and acidic residues. Residues 2159 to 2170 (GPVPVPVQPSRP) show a composition bias toward pro residues. Positions 2176–2185 (RKIDPKDEAL) are enriched in basic and acidic residues. 2 stretches are compositionally biased toward pro residues: residues 2199-2217 (MLSP…PRPK) and 2247-2261 (HTPP…PLPE). One can recognise an SH3 domain in the interval 2481–2542 (KDSGYVIALR…PADIVQPAAA (62 aa)). Residues 2548 to 2567 (SKEQRSGWHKGQLSNGEPGL) are disordered. Positions 2643–2789 (YTKAPIQESL…PPPGEMKAFL (147 aa)) constitute a MyTH4 2 domain. An FERM domain is found at 2795-3096 (RLLLIHLPGG…ASCTEWPSIN (302 aa)).

It belongs to the TRAFAC class myosin-kinesin ATPase superfamily. Myosin family. In terms of tissue distribution, detected in brain, stomach and kidney.

Its subcellular location is the cytoplasm. This chain is Unconventional myosin-XVB, found in Homo sapiens (Human).